A 263-amino-acid polypeptide reads, in one-letter code: Hydroxyethylthiazole kinase (263 aa).

Met45 contacts substrate. ATP contacts are provided by Arg121 and Ser167. Residue Gly194 coordinates substrate.

Belongs to the Thz kinase family. Requires Mg(2+) as cofactor.

The catalysed reaction is 5-(2-hydroxyethyl)-4-methylthiazole + ATP = 4-methyl-5-(2-phosphooxyethyl)-thiazole + ADP + H(+). The protein operates within cofactor biosynthesis; thiamine diphosphate biosynthesis; 4-methyl-5-(2-phosphoethyl)-thiazole from 5-(2-hydroxyethyl)-4-methylthiazole: step 1/1. In terms of biological role, catalyzes the phosphorylation of the hydroxyl group of 4-methyl-5-beta-hydroxyethylthiazole (THZ). This Vibrio campbellii (strain ATCC BAA-1116) protein is Hydroxyethylthiazole kinase.